The following is a 364-amino-acid chain: 3-dehydroquinate synthase (364 aa).

Residues 105–109 (GVVGD), 129–130 (TT), K142, and K151 each bind NAD(+). Zn(2+)-binding residues include E184, H247, and H264.

The protein belongs to the sugar phosphate cyclases superfamily. Dehydroquinate synthase family. Requires Co(2+) as cofactor. It depends on Zn(2+) as a cofactor. The cofactor is NAD(+).

It localises to the cytoplasm. It carries out the reaction 7-phospho-2-dehydro-3-deoxy-D-arabino-heptonate = 3-dehydroquinate + phosphate. It participates in metabolic intermediate biosynthesis; chorismate biosynthesis; chorismate from D-erythrose 4-phosphate and phosphoenolpyruvate: step 2/7. Its function is as follows. Catalyzes the conversion of 3-deoxy-D-arabino-heptulosonate 7-phosphate (DAHP) to dehydroquinate (DHQ). The sequence is that of 3-dehydroquinate synthase from Acidithiobacillus ferrooxidans (strain ATCC 23270 / DSM 14882 / CIP 104768 / NCIMB 8455) (Ferrobacillus ferrooxidans (strain ATCC 23270)).